The chain runs to 173 residues: Flavodoxin (173 aa).

Positions 2-168 (IGIFFSTSTG…RVAGWVEAVV (167 aa)) constitute a Flavodoxin-like domain.

This sequence belongs to the flavodoxin family. The cofactor is FMN.

Its function is as follows. Low-potential electron donor to a number of redox enzymes. The chain is Flavodoxin from Chondrus crispus (Carrageen Irish moss).